Reading from the N-terminus, the 941-residue chain is Coiled-coil domain-containing protein 40 (941 aa).

Positions 1–14 (MEGRQEDQMNRQEE) are enriched in basic and acidic residues. The disordered stretch occupies residues 1-31 (MEGRQEDQMNRQEEVEQSNNYDRSVDHARTG). Coiled coils occupy residues 130 to 154 (VQEM…AAAQ), 210 to 430 (DIKA…QIMN), 548 to 572 (LEIH…CQQL), 609 to 765 (IRRE…AKSK), 814 to 856 (AQLE…EIKE), and 895 to 915 (HKQE…AQEY).

The protein belongs to the CCDC40 family. In terms of tissue distribution, expressed in tissues that contain motile cilia, including Kupffer's vesicle, the floorplate, the pronephric tubules and the otic vesicle.

It is found in the cytoplasm. The protein resides in the cell projection. It localises to the cilium. Functionally, required for assembly of dynein regulatory complex (DRC) and inner dynein arm (IDA) complexes, which are responsible for ciliary beat regulation, thereby playing a central role in motility in cilia and flagella. Probably acts together with ccdc39 to form a molecular ruler that determines the 96 nanometer (nm) repeat length and arrangements of components in cilia and flagella. This chain is Coiled-coil domain-containing protein 40 (ccdc40), found in Danio rerio (Zebrafish).